The sequence spans 481 residues: UDP-N-acetylmuramate--L-alanine ligase (481 aa).

Residue 123-129 coordinates ATP; it reads GTHGKTT.

The protein belongs to the MurCDEF family.

It is found in the cytoplasm. It catalyses the reaction UDP-N-acetyl-alpha-D-muramate + L-alanine + ATP = UDP-N-acetyl-alpha-D-muramoyl-L-alanine + ADP + phosphate + H(+). Its pathway is cell wall biogenesis; peptidoglycan biosynthesis. Functionally, cell wall formation. The protein is UDP-N-acetylmuramate--L-alanine ligase of Pseudomonas fluorescens (strain SBW25).